Reading from the N-terminus, the 381-residue chain is Creatine kinase M-type (381 aa).

In terms of domain architecture, Phosphagen kinase N-terminal spans 11 to 98 (KLNYSAAEEF…FDPVIEDRHG (88 aa)). One can recognise a Phosphagen kinase C-terminal domain in the interval 125–367 (YVLSSRVRTG…KLMVEMEKRL (243 aa)). ATP is bound by residues 128 to 132 (SSRVR), His191, Arg236, Arg292, 320 to 325 (RGTGGV), and Asp335.

Belongs to the ATP:guanido phosphotransferase family. Dimer of identical or non-identical chains. With MM being the major form in skeletal muscle and myocardium, MB existing in myocardium, and BB existing in many tissues, especially brain.

It is found in the cytoplasm. It catalyses the reaction creatine + ATP = N-phosphocreatine + ADP + H(+). In terms of biological role, reversibly catalyzes the transfer of phosphate between ATP and various phosphogens (e.g. creatine phosphate). Creatine kinase isoenzymes play a central role in energy transduction in tissues with large, fluctuating energy demands, such as skeletal muscle, heart, brain and spermatozoa. This chain is Creatine kinase M-type, found in Torpedo marmorata (Marbled electric ray).